Consider the following 223-residue polypeptide: Cytidylate kinase (223 aa).

10-18 (GPAGSGKSS) is a binding site for ATP.

This sequence belongs to the cytidylate kinase family. Type 1 subfamily.

It localises to the cytoplasm. It catalyses the reaction CMP + ATP = CDP + ADP. It carries out the reaction dCMP + ATP = dCDP + ADP. The polypeptide is Cytidylate kinase (Pseudothermotoga lettingae (strain ATCC BAA-301 / DSM 14385 / NBRC 107922 / TMO) (Thermotoga lettingae)).